Reading from the N-terminus, the 1755-residue chain is Transposon Ty1-NL1 Gag-Pol polyprotein (1755 aa).

Polar residues-rich tracts occupy residues Met-1–Ser-23, Thr-48–Ser-60, Ser-71–Gln-86, and Pro-131–Phe-152. Disordered stretches follow at residues Met-1–Gln-86, Pro-131–Pro-171, and Gln-350–Ser-420. Over residues Thr-153–Thr-165 the composition is skewed to low complexity. The tract at residues Asn-299–His-401 is RNA-binding. The segment covering Asn-363–Arg-372 has biased composition (basic and acidic residues). Positions Thr-373–Pro-412 are enriched in polar residues. Catalysis depends on Asp-461, which acts as the For protease activity; shared with dimeric partner. The integrase-type zinc finger-like stretch occupies residues Asn-583 to Cys-640. The Integrase catalytic domain maps to Asn-660–Pro-835. Mg(2+)-binding residues include Asp-671 and Asp-736. Disordered regions lie at residues Ser-956 to Lys-1120 and Asp-1146 to Tyr-1172. Low complexity predominate over residues Ser-960 to Thr-969. Residues Ser-1005–Thr-1015 show a composition bias toward polar residues. The segment covering Glu-1038 to Ser-1053 has biased composition (basic and acidic residues). 2 stretches are compositionally biased toward polar residues: residues Tyr-1054–Glu-1082 and Ser-1095–Leu-1106. Positions Lys-1178–Arg-1212 match the Bipartite nuclear localization signal motif. The Reverse transcriptase Ty1/copia-type domain maps to Asn-1338 to Gln-1476. 6 residues coordinate Mg(2+): Asp-1346, Asp-1427, Asp-1428, Asp-1610, Glu-1652, and Asp-1685. Residues Asp-1610 to Lys-1752 enclose the RNase H Ty1/copia-type domain.

The capsid protein forms a homotrimer, from which the VLPs are assembled. The protease is a homodimer, whose active site consists of two apposed aspartic acid residues. In terms of processing, initially, virus-like particles (VLPs) are composed of the structural unprocessed proteins Gag and Gag-Pol, and also contain the host initiator methionine tRNA (tRNA(i)-Met) which serves as a primer for minus-strand DNA synthesis, and a dimer of genomic Ty RNA. Processing of the polyproteins occurs within the particle and proceeds by an ordered pathway, called maturation. First, the protease (PR) is released by autocatalytic cleavage of the Gag-Pol polyprotein yielding capsid protein p45 and a Pol-p154 precursor protein. This cleavage is a prerequisite for subsequent processing of Pol-p154 at the remaining sites to release the mature structural and catalytic proteins. Maturation takes place prior to the RT reaction and is required to produce transposition-competent VLPs.

It is found in the cytoplasm. It localises to the nucleus. The catalysed reaction is DNA(n) + a 2'-deoxyribonucleoside 5'-triphosphate = DNA(n+1) + diphosphate. It carries out the reaction Endonucleolytic cleavage to 5'-phosphomonoester.. Capsid protein (CA) is the structural component of the virus-like particle (VLP), forming the shell that encapsulates the retrotransposons dimeric RNA genome. The particles are assembled from trimer-clustered units and there are holes in the capsid shells that allow for the diffusion of macromolecules. CA also has nucleocapsid-like chaperone activity, promoting primer tRNA(i)-Met annealing to the multipartite primer-binding site (PBS), dimerization of Ty1 RNA and initiation of reverse transcription. In terms of biological role, the aspartyl protease (PR) mediates the proteolytic cleavages of the Gag and Gag-Pol polyproteins after assembly of the VLP. Functionally, reverse transcriptase/ribonuclease H (RT) is a multifunctional enzyme that catalyzes the conversion of the retro-elements RNA genome into dsDNA within the VLP. The enzyme displays a DNA polymerase activity that can copy either DNA or RNA templates, and a ribonuclease H (RNase H) activity that cleaves the RNA strand of RNA-DNA heteroduplexes during plus-strand synthesis and hydrolyzes RNA primers. The conversion leads to a linear dsDNA copy of the retrotransposon that includes long terminal repeats (LTRs) at both ends. Its function is as follows. Integrase (IN) targets the VLP to the nucleus, where a subparticle preintegration complex (PIC) containing at least integrase and the newly synthesized dsDNA copy of the retrotransposon must transit the nuclear membrane. Once in the nucleus, integrase performs the integration of the dsDNA into the host genome. The sequence is that of Transposon Ty1-NL1 Gag-Pol polyprotein (TY1B-NL1) from Saccharomyces cerevisiae (strain ATCC 204508 / S288c) (Baker's yeast).